A 393-amino-acid chain; its full sequence is Riboflavin biosynthesis protein RibBA (393 aa).

The segment at 1–200 (MQFDTIELAI…IKSLVAFRKA (200 aa)) is DHBP synthase. Residues 27 to 28 (RE), D32, 139 to 143 (RNGHT), and E163 contribute to the D-ribulose 5-phosphate site. Residue E28 participates in Mg(2+) binding. H142 lines the Mg(2+) pocket. Residues 201-393 (VELNVNLKAK…TKKNKMGHLI (193 aa)) are GTP cyclohydrolase II. 249-253 (RMHSA) serves as a coordination point for GTP. 3 residues coordinate Zn(2+): C254, C265, and C267. GTP-binding positions include Q270, 291 to 293 (EGR), and T313. The active-site Proton acceptor; for GTP cyclohydrolase activity is D325. R327 functions as the Nucleophile; for GTP cyclohydrolase activity in the catalytic mechanism. The GTP site is built by S348 and K353.

The protein in the N-terminal section; belongs to the DHBP synthase family. In the C-terminal section; belongs to the GTP cyclohydrolase II family. Mg(2+) serves as cofactor. It depends on Mn(2+) as a cofactor. The cofactor is Zn(2+).

The enzyme catalyses D-ribulose 5-phosphate = (2S)-2-hydroxy-3-oxobutyl phosphate + formate + H(+). It catalyses the reaction GTP + 4 H2O = 2,5-diamino-6-hydroxy-4-(5-phosphoribosylamino)-pyrimidine + formate + 2 phosphate + 3 H(+). Its pathway is cofactor biosynthesis; riboflavin biosynthesis; 2-hydroxy-3-oxobutyl phosphate from D-ribulose 5-phosphate: step 1/1. It participates in cofactor biosynthesis; riboflavin biosynthesis; 5-amino-6-(D-ribitylamino)uracil from GTP: step 1/4. Functionally, catalyzes the conversion of D-ribulose 5-phosphate to formate and 3,4-dihydroxy-2-butanone 4-phosphate. In terms of biological role, catalyzes the conversion of GTP to 2,5-diamino-6-ribosylamino-4(3H)-pyrimidinone 5'-phosphate (DARP), formate and pyrophosphate. This Staphylococcus epidermidis (strain ATCC 12228 / FDA PCI 1200) protein is Riboflavin biosynthesis protein RibBA.